Here is a 289-residue protein sequence, read N- to C-terminus: NAD(P)H-hydrate epimerase (289 aa).

Residues 71-277 enclose the YjeF N-terminal domain; it reads AQTIDNELMS…SIVEKYNLKI (207 aa). 122-126 is a (6S)-NADPHX binding site; sequence NNGGD. K(+) is bound by residues N123 and D185. (6S)-NADPHX-binding positions include 189–195 and D218; that span reads GFSFRGE. S221 provides a ligand contact to K(+).

Belongs to the NnrE/AIBP family. K(+) serves as cofactor.

It catalyses the reaction (6R)-NADHX = (6S)-NADHX. The catalysed reaction is (6R)-NADPHX = (6S)-NADPHX. In terms of biological role, catalyzes the epimerization of the S- and R-forms of NAD(P)HX, a damaged form of NAD(P)H that is a result of enzymatic or heat-dependent hydration. This is a prerequisite for the S-specific NAD(P)H-hydrate dehydratase to allow the repair of both epimers of NAD(P)HX. The sequence is that of NAD(P)H-hydrate epimerase from Plasmodium knowlesi (strain H).